An 828-amino-acid polypeptide reads, in one-letter code: MKMKQFNLLSLFLILITSFGSANSTIVSHDERAITIDGQRRILLSGSIHYPRSTSDMWPDLISKAKDGGLDTIETYVFWNAHEPSRRQYDFSGNLDLVRFIKTIQSAGLYSVLRIGPYVCAEWNYGGFPVWLHNMPDMKFRTINPGFMNEMQNFTTKIVNMMKEESLFASQGGPIILAQIENEYGNVISSYGAEGKAYIDWCANMANSLDIGVPWIMCQQPHAPQPMIETCNGFYCDQYKPSNPSSPKMWTENWTGWFKNWGGKHPYRTAEDLAFSVARFFQTGGTFQNYYMYHGGTNFGRVAGGPYITTSYDYDAPLDEYGNLNQPKWGHLKQLHTLLKSMEKPLTYGNISTIDLGNSVTATVYSTNEKSSCFIGNVNATADALVNFKGKDYNVPAWSVSVLPDCDKEAYNTARVNTQTSIITEDSCDEPEKLKWTWRPEFTTQKTILKGSGDLIAKGLVDQKDVTNDASDYLWYMTRVHLDKKDPIWSRNMSLRVHSNAHVLHAYVNGKYVGNQIVRDNKFDYRFEKKVNLVHGTNHLALLSVSVGLQNYGPFFESGPTGINGPVKLVGYKGDETIEKDLSKHQWDYKIGLNGFNHKLFSMKSAGHHHRKWSTEKLPADRMLSWYKANFKAPLGKDPVIVDLNGLGKGEVWINGQSIGRYWPSFNSSDEGCTEECDYRGEYGSDKCAFMCGKPTQRWYHVPRSFLNDKGHNTITLFEEMGGDPSMVKFKTVVTGRVCAKAHEHNKVELSCNNRPISAVKFASFGNPSGQCGSFAAGSCEGAKDAVKVVAKECVGKLNCTMNVSSHKFGSNLDCGDSPKRLFVEVEC.

Residues 1 to 20 (MKMKQFNLLSLFLILITSFG) form the signal peptide. Asn-23 and Asn-153 each carry an N-linked (GlcNAc...) asparagine glycan. The active-site Proton donor is the Glu-183. The active-site Nucleophile is Glu-252. 7 N-linked (GlcNAc...) asparagine glycosylation sites follow: Asn-253, Asn-350, Asn-379, Asn-492, Asn-667, Asn-799, and Asn-803. The SUEL-type lectin domain occupies 742 to 828 (AHEHNKVELS…PKRLFVEVEC (87 aa)).

It belongs to the glycosyl hydrolase 35 family.

The protein localises to the secreted. Its subcellular location is the extracellular space. The protein resides in the apoplast. It carries out the reaction Hydrolysis of terminal non-reducing beta-D-galactose residues in beta-D-galactosides.. In Brassica oleracea (Wild cabbage), this protein is Beta-galactosidase.